A 339-amino-acid polypeptide reads, in one-letter code: Adenylosuccinate synthetase (339 aa).

Residues 12-18 (GDEGKGS) and 42-44 (GHS) contribute to the GTP site. The Proton acceptor role is filled by Asp13. Mg(2+)-binding residues include Asp13 and Gly42. Residues 13–16 (DEGK), 40–43 (NAGH), Thr127, Arg141, Gln179, Thr194, and Arg256 contribute to the IMP site. The Proton donor role is filled by His43. Substrate is bound at residue 252–258 (TVTGRRR). Residues Arg258, 284 to 286 (MLD), and 324 to 326 (KTG) contribute to the GTP site.

Belongs to the adenylosuccinate synthetase family. Homodimer. Requires Mg(2+) as cofactor.

It localises to the cytoplasm. It catalyses the reaction IMP + L-aspartate + GTP = N(6)-(1,2-dicarboxyethyl)-AMP + GDP + phosphate + 2 H(+). It participates in purine metabolism; AMP biosynthesis via de novo pathway; AMP from IMP: step 1/2. In terms of biological role, plays an important role in the de novo pathway of purine nucleotide biosynthesis. Catalyzes the first committed step in the biosynthesis of AMP from IMP. This is Adenylosuccinate synthetase from Thermococcus onnurineus (strain NA1).